The chain runs to 1219 residues: Polyamine-transporting ATPase 13A3 (1219 aa).

Over 1-28 (MDKEERKTINKGQEDEMEIHGYNLCRWK) the chain is Cytoplasmic. The stretch at 29-49 (LAMVFVGVICTGGFLLLLLYW) is an intramembrane region. At 50–201 (LPEWRVKATC…IAVKVPSVFK (152 aa)) the chain is on the cytoplasmic side. A helical transmembrane segment spans residues 202–222 (LLIKEVLNPFYIFQLFSVILW). Over 223–228 (SVDEYY) the chain is Lumenal. A helical transmembrane segment spans residues 229-249 (YYALAIVIMSVVSIISSLYSI). Over 250–405 (RKQYVMLHDM…KPTDFKLYRD (156 aa)) the chain is Cytoplasmic. Residues 406-426 (AYLFLLCLVVVAGIGFIYTII) traverse the membrane as a helical segment. The Lumenal portion of the chain corresponds to 427–444 (NSILNEKEVQEIIIKSLD). Residues 445–465 (IITITVPPALPAAMTAGIVYA) form a helical membrane-spanning segment. The Cytoplasmic portion of the chain corresponds to 466–936 (QRRLKKVGIF…ALMTSFCVFK (471 aa)). Asp-494 acts as the 4-aspartylphosphate intermediate in catalysis. Asp-494 and Thr-496 together coordinate Mg(2+). ATP contacts are provided by residues 494-496 (DKT), Phe-624, Arg-680, and Asp-746. Phosphoserine is present on Ser-813. Residues Asp-879 and Asp-883 each coordinate Mg(2+). 879 to 883 (DGAND) lines the ATP pocket. The helical transmembrane segment at 937-957 (FMALYSIIQYFSVTLLYSILS) threads the bilayer. A topological domain (lumenal) is located at residue Asn-958. A helical membrane pass occupies residues 959 to 979 (LGDFQFLFIDLAIILVVVFTM). At 980–995 (SLNPAWKELVAQRPPS) the chain is on the cytoplasmic side. A helical transmembrane segment spans residues 996-1016 (GLISGALLFSVLSQIVISVGF). Residues 1017–1066 (QSLGFFWVKQYKVCDPNSDVCNTTRSACWNSSHLYNGTELDSCKIQNYEN) lie on the Lumenal side of the membrane. A helical transmembrane segment spans residues 1067-1087 (TTVFFISSFQYLTVAVAFSKG). Topologically, residues 1088–1098 (KPFRQPCYKNY) are cytoplasmic. Residues 1099-1119 (FFVISVIILYVFILFIMLHPV) traverse the membrane as a helical segment. At 1120 to 1136 (ASVDQVLEIMCVPYQWR) the chain is on the lumenal side. The helical transmembrane segment at 1137–1157 (IYMLIIVLINAFVSITVEESV) threads the bilayer. Topologically, residues 1158–1219 (DRWGKCCLSW…NGSCQIITIA (62 aa)) are cytoplasmic.

Belongs to the cation transport ATPase (P-type) (TC 3.A.3) family. Type V subfamily. In terms of tissue distribution, expression is greatest in liver, followed by kidney, colon, stomach, brain and small intestine. Isoform 1 is highly expressed in the kidney while isoform 2 is highly expressed in the brain.

The protein resides in the recycling endosome membrane. It localises to the early endosome membrane. It is found in the late endosome membrane. It catalyses the reaction putrescine(out) + ATP + H2O = putrescine(in) + ADP + phosphate + H(+). In terms of biological role, ATP-driven pump involved in endocytosis-dependent polyamine transport. Uses ATP as an energy source to transfer polyamine precursor putrescine from the endosomal compartment to the cytosol. This is Polyamine-transporting ATPase 13A3 from Mus musculus (Mouse).